We begin with the raw amino-acid sequence, 481 residues long: MKNLKMVFFKILFISLMAGLAMKGSKINVEDLQKFSLHHTQNNLQTISLLLFLVVFVWILYMLTRPKPVYLVDFSCYLPPSHLKVSIQTLMGHARRAREAGMCWKNKESDHLVDFQEKILERSGLGQETYIPEGLQCFPLQQGMGASRKETEEVIFGALDNLFRNTGVKPDDIGILVVNSSTFNPTPSLASMIVNKYKLRDNIKSLNLGGMGCSAGVIAVDVAKGLLQVHRNTYAIVVSTENITQNLYLGKNKSMLVTNCLFRVGGAAVLLSNRSRDRNRAKYELVHTVRIHTGSDDRSFECATQEEDEDGIIGVTLTKNLPMVAARTLKINIATLGPLVLPLKEKLAFFITFVKKKYFKPELRNYTPDFKLAFEHFCIHAGGRALIDELEKNLKLSPLHVEASRMTLHRFGNTSSSSIWYELAYTEAKGRMKEGDRIWQIALGSGFKCNSSVWVALRDVKPSANSPWEDCMDRYPVEIDI.

The next 2 helical transmembrane spans lie at 4–24 (LKMV…AMKG) and 44–64 (LQTI…YMLT). In terms of domain architecture, FAE spans 61–358 (YMLTRPKPVY…FFITFVKKKY (298 aa)). Residues Cys-213, His-292, His-376, His-380, His-409, and Asn-413 contribute to the active site.

This sequence belongs to the thiolase-like superfamily. Chalcone/stilbene synthases family. Expressed in leaves and seedlings.

The protein localises to the endoplasmic reticulum membrane. It catalyses the reaction a very-long-chain acyl-CoA + malonyl-CoA + H(+) = a very-long-chain 3-oxoacyl-CoA + CO2 + CoA. It functions in the pathway lipid metabolism; fatty acid biosynthesis. This chain is 3-ketoacyl-CoA synthase 8, found in Arabidopsis thaliana (Mouse-ear cress).